A 135-amino-acid chain; its full sequence is MNRLQLLSKGLRLIHKMSEEALAGVPLVHISPEGIFKYVMINVIDGGDASKAVIRGFADCTWHADIFDREEEVFKKLGLRAECPGGGRIEHNPDKKYLKVYGYSQGFGKADHAQTKRILATKYPDYTIETSDEGY.

Residue lysine 37 coordinates substrate. Histidine 63 serves as the catalytic Proton acceptor. Serine 104–glycine 106 is a binding site for substrate.

It belongs to the janus family.

Its function is as follows. JanA and janB regulate somatic sex differentiation. In Drosophila orena (Fruit fly), this protein is Sex-regulated protein janus-A (janA).